A 309-amino-acid polypeptide reads, in one-letter code: Isoaspartyl peptidase/L-asparaginase (309 aa).

Thr166 (nucleophile) is an active-site residue. Substrate-binding positions include 194–197 (RVGD) and 217–220 (TGHG).

Belongs to the Ntn-hydrolase family. In terms of assembly, heterodimer of an alpha and beta chain produced by autocleavage. Cleaved into an alpha and beta chain by autocatalysis; this activates the enzyme. The N-terminal residue of the beta subunit is responsible for the nucleophile hydrolase activity.

The protein localises to the cytoplasm. The enzyme catalyses L-asparagine + H2O = L-aspartate + NH4(+). It catalyses the reaction Cleavage of a beta-linked Asp residue from the N-terminus of a polypeptide.. Has both L-asparaginase and beta-aspartyl peptidase activity. Does not have aspartylglucosaminidase activity and is inactive toward GlcNAc-L-Asn. Likewise, has no activity toward glutamine. The chain is Isoaspartyl peptidase/L-asparaginase (asrgl1) from Xenopus laevis (African clawed frog).